The sequence spans 491 residues: NADH-quinone oxidoreductase subunit N 1 (491 aa).

The next 14 membrane-spanning stretches (helical) occupy residues 15 to 35 (VLGM…VDMF), 41 to 61 (VLLT…ALDY), 77 to 97 (FGVL…LIAF), 105 to 125 (LSQG…LFLV), 130 to 150 (LVTI…LTGF), 165 to 185 (LLLG…IYGM), 211 to 231 (PILL…VSMF), 247 to 269 (PVTA…RFLN), 279 to 299 (WQLL…IVAV), 307 to 327 (MLAY…LAAS), 333 to 353 (AFTV…AVLI), 378 to 398 (LALA…TAGF), 416 to 436 (LAII…RVIV), and 459 to 479 (LGVI…NIFT).

The protein belongs to the complex I subunit 2 family. In terms of assembly, NDH-1 is composed of 14 different subunits. Subunits NuoA, H, J, K, L, M, N constitute the membrane sector of the complex.

Its subcellular location is the cell membrane. The enzyme catalyses a quinone + NADH + 5 H(+)(in) = a quinol + NAD(+) + 4 H(+)(out). Functionally, NDH-1 shuttles electrons from NADH, via FMN and iron-sulfur (Fe-S) centers, to quinones in the respiratory chain. The immediate electron acceptor for the enzyme in this species is believed to be ubiquinone. Couples the redox reaction to proton translocation (for every two electrons transferred, four hydrogen ions are translocated across the cytoplasmic membrane), and thus conserves the redox energy in a proton gradient. The protein is NADH-quinone oxidoreductase subunit N 1 of Herpetosiphon aurantiacus (strain ATCC 23779 / DSM 785 / 114-95).